A 543-amino-acid chain; its full sequence is MSIDTDFLTSVEVKEDELHGNVLIAVTQIALGRTIGVIDKATPNDSNALLILNLIKEADDGEDANICMRQEDRKTFLQTSKIINIGERLLLQRLSEEECDEEDQDDLENLILLKDEDRPDSTQSCTKSSSEDSNLNGFEEYIREHGELVPGQTPPDGSHKCGVCPKSFSSASGLKQHSHIHCSLKPFRCHLCPKSYTQFSNLCRHRRVHSDGWTCPTCQSQMPSQAALTKHRPVCEMTALYKPLMAQLAGLSGAGGLGSVPYWPHILQMATQAPHFPLAFLAANPEAYKLMQQTTCASPDAECSSGHASESSPTTTEPVDLTATPKPPSTSEMETTSKSDDGEDRDSIGDSGNDDDDDSEAGVLDESSTTTSTKKRPTSHTISDILAAPQLGAQALNSTFLGMLQRSLNYNPAVPSPHSFLRAMSGAKASSSPSSSSGSGKDRYTCKFCQKVFPRSANLTRHLRTHTGEQPYKCQYCERSFSISSNLQRHVRNIHNKPNTSLTPHNHHRQRSLHNSTSTSTTTTTVHHPLLHLPGTSVPVPKV.

Residues 2 to 62 (SIDTDFLTSV…NLIKEADDGE (61 aa)) form a positive regulatory (PR) domain region. 2 C2H2-type zinc fingers span residues 159 to 181 (HKCG…SHIH) and 187 to 209 (FRCH…RRVH). The segment at 213-233 (WTCPTCQSQMPSQAALTKHRP) adopts a C2H2-type 3; atypical zinc-finger fold. The interval 299-380 (PDAECSSGHA…TSTKKRPTSH (82 aa)) is disordered. The span at 306–317 (GHASESSPTTTE) shows a compositional bias: polar residues. Over residues 335 to 348 (TTSKSDDGEDRDSI) the composition is skewed to basic and acidic residues. 2 C2H2-type zinc fingers span residues 444–466 (YTCK…LRTH) and 472–495 (YKCQ…RNIH). The segment at 496 to 543 (NKPNTSLTPHNHHRQRSLHNSTSTSTTTTTVHHPLLHLPGTSVPVPKV) is disordered. Residues 513–533 (LHNSTSTSTTTTTVHHPLLHL) show a composition bias toward low complexity.

It is found in the nucleus. Its function is as follows. Probable transcription factor, required for migration of the hermaphrodite-specific motor neurons (HSNs) from the tail to the gonad primordium during HSN cell differentiation. Required for phasmid neuron development. Required to specify the pi-cell fate of ventral uterine precursor cell (VU) cells. Probable transcription factor, involved in lin-12 (Notch)-dependent anchor cell (AC) and ventral uterine (VU) precursor cell fate specification and in AC invasion. Prevents AC proliferation after AC cell specification by repressing lin-12 expression. May form a positive feedback loop, together with the transcription factor fos-1, that maintains mutual high levels of expression and so activates AC invasion. In terms of biological role, dispensable for anchor cell (AC) invasion and for preventing AC proliferation. The sequence is that of Zinc finger protein egl-43 from Caenorhabditis elegans.